The primary structure comprises 509 residues: uncharacterized protein (509 aa).

The next 13 helical transmembrane spans lie at 14-34 (SAFT…WVIP), 117-137 (TIEA…IGVI), 158-178 (EFFI…TCGI), 188-208 (ILVP…GAIF), 209-229 (LAAS…VIAS), 240-260 (IGFR…YLYW), 303-323 (LILT…MVGG), 324-344 (WWFP…MFIS), 359-379 (ASEL…NLVL), 399-419 (MPGS…GLIV), 423-443 (SGLA…VGIP), 458-478 (MLFL…QIPF), and 484-504 (FVMP…VVQV).

The protein to E.coli YfcC. To B.subtilis YcgA.

The protein localises to the cell membrane. This is an uncharacterized protein from Haemophilus influenzae (strain ATCC 51907 / DSM 11121 / KW20 / Rd).